The sequence spans 220 residues: Thiopurine S-methyltransferase (220 aa).

Residues Trp14, Leu49, Glu70, and Arg127 each coordinate S-adenosyl-L-methionine.

The protein belongs to the class I-like SAM-binding methyltransferase superfamily. TPMT family.

The protein localises to the cytoplasm. The enzyme catalyses S-adenosyl-L-methionine + a thiopurine = S-adenosyl-L-homocysteine + a thiopurine S-methylether.. This is Thiopurine S-methyltransferase from Gluconobacter oxydans (strain 621H) (Gluconobacter suboxydans).